The primary structure comprises 86 residues: Large ribosomal subunit protein uL23 (86 aa).

This sequence belongs to the universal ribosomal protein uL23 family. As to quaternary structure, part of the 50S ribosomal subunit. Contacts protein L29.

Functionally, binds to 23S rRNA. One of the proteins that surrounds the polypeptide exit tunnel on the outside of the ribosome. The protein is Large ribosomal subunit protein uL23 of Methanococcus aeolicus (strain ATCC BAA-1280 / DSM 17508 / OCM 812 / Nankai-3).